The primary structure comprises 309 residues: ATP synthase gamma chain (309 aa).

It belongs to the ATPase gamma chain family. In terms of assembly, F-type ATPases have 2 components, CF(1) - the catalytic core - and CF(0) - the membrane proton channel. CF(1) has five subunits: alpha(3), beta(3), gamma(1), delta(1), epsilon(1). CF(0) has three main subunits: a, b and c.

Its subcellular location is the cell membrane. In terms of biological role, produces ATP from ADP in the presence of a proton gradient across the membrane. The gamma chain is believed to be important in regulating ATPase activity and the flow of protons through the CF(0) complex. In Mycolicibacterium vanbaalenii (strain DSM 7251 / JCM 13017 / BCRC 16820 / KCTC 9966 / NRRL B-24157 / PYR-1) (Mycobacterium vanbaalenii), this protein is ATP synthase gamma chain.